The sequence spans 177 residues: Ribosome maturation factor RimM (177 aa).

The region spanning 96–177 (DNEFYWVDLI…KITVDWGLDY (82 aa)) is the PRC barrel domain.

This sequence belongs to the RimM family. Binds ribosomal protein uS19.

It localises to the cytoplasm. In terms of biological role, an accessory protein needed during the final step in the assembly of 30S ribosomal subunit, possibly for assembly of the head region. Essential for efficient processing of 16S rRNA. May be needed both before and after RbfA during the maturation of 16S rRNA. It has affinity for free ribosomal 30S subunits but not for 70S ribosomes. In Herminiimonas arsenicoxydans, this protein is Ribosome maturation factor RimM.